The chain runs to 174 residues: Glyoxylase I 4 (174 aa).

Positions 13–135 (SLNHVSVLCR…DGFMIEICNC (123 aa)) constitute a VOC domain. Residue Glu-131 is the Proton donor/acceptor of the active site.

This sequence belongs to the glyoxalase I family. Mostly expressed in roots, and, to a lower extent, in leaves, flowers, seeds and siliques.

The protein resides in the cell membrane. It localises to the cytoplasm. Involved in the detoxification and scavenging of methylglyoxal (MG), a cytotoxic aldehyde produced in response to primary metabolism alteration observed during biotic and abiotic stresses. Modulates cross-talk between salicylic acid (SA) and jasmonic acid (JA) signaling pathways during defense responses to pathogens such as Botrytis cinerea. In Arabidopsis thaliana (Mouse-ear cress), this protein is Glyoxylase I 4.